The sequence spans 229 residues: Large ribosomal subunit protein bL25 (229 aa).

Disordered regions lie at residues Met1–Arg21 and Asn182–Lys229. Over residues Pro195–Ala222 the composition is skewed to low complexity.

Belongs to the bacterial ribosomal protein bL25 family. CTC subfamily. In terms of assembly, part of the 50S ribosomal subunit; part of the 5S rRNA/L5/L18/L25 subcomplex. Contacts the 5S rRNA. Binds to the 5S rRNA independently of L5 and L18.

Functionally, this is one of the proteins that binds to the 5S RNA in the ribosome where it forms part of the central protuberance. The chain is Large ribosomal subunit protein bL25 from Sorangium cellulosum (strain So ce56) (Polyangium cellulosum (strain So ce56)).